Consider the following 654-residue polypeptide: tRNA uridine 5-carboxymethylaminomethyl modification enzyme MnmG (654 aa).

Residue 17–22 (GGGHAG) participates in FAD binding. Residue 289–303 (GPRYCPSIEDKIVKF) participates in NAD(+) binding.

It belongs to the MnmG family. In terms of assembly, homodimer. Heterotetramer of two MnmE and two MnmG subunits. FAD serves as cofactor.

The protein resides in the cytoplasm. Its function is as follows. NAD-binding protein involved in the addition of a carboxymethylaminomethyl (cmnm) group at the wobble position (U34) of certain tRNAs, forming tRNA-cmnm(5)s(2)U34. In Prochlorococcus marinus (strain MIT 9515), this protein is tRNA uridine 5-carboxymethylaminomethyl modification enzyme MnmG.